The following is a 295-amino-acid chain: Small ribosomal subunit protein uS2 (295 aa).

Residues 263 to 295 form a disordered region; that stretch reads KKFSKTKNIDEETNTEFEKALNDADENKNSDNA. Basic and acidic residues predominate over residues 278 to 295; it reads EFEKALNDADENKNSDNA.

Belongs to the universal ribosomal protein uS2 family.

The polypeptide is Small ribosomal subunit protein uS2 (Rickettsia peacockii (strain Rustic)).